The sequence spans 247 residues: Vacuolar iron transporter 1 (247 aa).

Residues 1–33 lie on the Cytoplasmic side of the membrane; the sequence is MVIAGVSPPTPSSENLLQEHEEKHFTATDVVRD. The chain crosses the membrane as a helical span at residues 34 to 54; that stretch reads VIIGVSDGLTVPFALAAGLSG. At 55–60 the chain is on the vacuolar side; sequence ANVPSS. A helical transmembrane segment spans residues 61-81; that stretch reads LILTAGIAEVAAGAISMGLGG. At 82–167 the chain is on the cytoplasmic side; it reads YLAAKSEEDH…PRRALESAMT (86 aa). Glu99, Glu102, Glu110, Glu113, Met146, and Glu150 together coordinate Fe cation. Residues 168–188 form a helical membrane-spanning segment; that stretch reads IALAYVVGGLVPLSPYFFIPF. The Vacuolar portion of the chain corresponds to 189-191; that stretch reads AKQ. A helical membrane pass occupies residues 192–212; that stretch reads AMITSIAVTLLALVVFGYIKG. Residues 213-219 lie on the Cytoplasmic side of the membrane; it reads RFTGSNP. A helical membrane pass occupies residues 220 to 240; it reads VLSSIQTAIIGALASAAAYAM. At 241–247 the chain is on the vacuolar side; that stretch reads AKAVQSV.

It belongs to the CCC1 family. As to expression, expressed at high levels in the blue epidermal cells of the inner bottom part of the petal (at protein level). No detectable expression in parenchyma and epidermis of the purple segments of the petal, parenchyma of the blue segments, leaf, stem, bulb and root (at protein level). High levels of mRNA in the blue epidermal cells of the inner bottom part of the petal. Low-levels of mRNA in the purple segments of the petal, stem, leaf, root, bulb and pistil.

Its subcellular location is the vacuole membrane. The catalysed reaction is Fe(2+)(in) = Fe(2+)(out). Its function is as follows. Vacuolar iron transporter involved in the transfer of iron ions from the cytosol to the vacuole for intracellular iron storage. Plays an essential role in the development of blue coloration in tulip petals most likely due to the accumulation of ferrous ions that can form complexes with anthocyanins. The chain is Vacuolar iron transporter 1 from Tulipa gesneriana (Garden tulip).